The primary structure comprises 382 residues: UDP-N-acetylglucosamine--N-acetylmuramyl-(pentapeptide) pyrophosphoryl-undecaprenol N-acetylglucosamine transferase (382 aa).

Residues 11 to 13 (TGG), asparagine 124, arginine 164, serine 192, and glutamine 314 each bind UDP-N-acetyl-alpha-D-glucosamine.

It belongs to the glycosyltransferase 28 family. MurG subfamily.

The protein localises to the cell membrane. It carries out the reaction di-trans,octa-cis-undecaprenyl diphospho-N-acetyl-alpha-D-muramoyl-L-alanyl-D-glutamyl-meso-2,6-diaminopimeloyl-D-alanyl-D-alanine + UDP-N-acetyl-alpha-D-glucosamine = di-trans,octa-cis-undecaprenyl diphospho-[N-acetyl-alpha-D-glucosaminyl-(1-&gt;4)]-N-acetyl-alpha-D-muramoyl-L-alanyl-D-glutamyl-meso-2,6-diaminopimeloyl-D-alanyl-D-alanine + UDP + H(+). Its pathway is cell wall biogenesis; peptidoglycan biosynthesis. Its function is as follows. Cell wall formation. Catalyzes the transfer of a GlcNAc subunit on undecaprenyl-pyrophosphoryl-MurNAc-pentapeptide (lipid intermediate I) to form undecaprenyl-pyrophosphoryl-MurNAc-(pentapeptide)GlcNAc (lipid intermediate II). The chain is UDP-N-acetylglucosamine--N-acetylmuramyl-(pentapeptide) pyrophosphoryl-undecaprenol N-acetylglucosamine transferase from Deinococcus deserti (strain DSM 17065 / CIP 109153 / LMG 22923 / VCD115).